A 522-amino-acid chain; its full sequence is Target of rapamycin complex 2 subunit MAPKAP1 (522 aa).

Position 2 is an N-acetylalanine (Ala-2). Residues 2 to 184 (AFLDNPTIIL…KKIDVYLPLH (183 aa)) form an interaction with MAP3K2 region. Residues 2 to 267 (AFLDNPTIIL…GFSTLALVEK (266 aa)) form an interaction with NBN region. A disordered region spans residues 38-59 (LEKTHPPSVPGDSGSEVQGSSG). Thr-86 carries the post-translational modification Phosphothreonine; by PKB/AKT1 and RPS6KB1. The residue at position 128 (Ser-128) is a Phosphoserine; by PKC. The CRIM domain maps to 139–267 (QSILSVRLEQ…GFSTLALVEK (129 aa)). Phosphoserine occurs at positions 186, 315, and 356. The interval 279–353 (LFVRINAAHG…QNAWEFCLVR (75 aa)) is SIN1-type RBD. Positions 382–487 (HYKSFKVSMI…IVLKVNYILE (106 aa)) constitute an SIN1-type PH domain. Residue Arg-393 participates in a 1,2-diacyl-sn-glycero-3-phospho-(1D-myo-inositol-3,4,5-trisphosphate) binding. Phosphothreonine; by RPS6KB1 is present on Thr-398. Positions 428 and 464 each coordinate a 1,2-diacyl-sn-glycero-3-phospho-(1D-myo-inositol-3,4,5-trisphosphate). Residues 468–522 (FESDAATVSEIVLKVNYILESRASTARADYLAQKQRKLNRRTSFSFQKEKKSGQQ) are interaction with ATF2. Ser-510 is modified (phosphoserine).

The protein belongs to the SIN1 family. As to quaternary structure, component of the mechanistic target of rapamycin complex 2 (mTORC2), consisting in two heterotretramers composed of MTOR, MLST8, RICTOR and MAPKAP1/SIN1. The mTORC2 core complex associates with PRR5/PROTOR1 and/or PRR5L/PROTOR2. Contrary to mTORC1, mTORC2 does not bind to and is not sensitive to FKBP12-rapamycin. Interacts with MAP3K2. Interacts with ATF2. Interacts with MAPK8. Interacts with GTP-bound HRAS and KRAS; inhibiting their activity. Interacts with IFNAR2. Post-translationally, phosphorylation at Ser-128 by PKC promotes relocalization to the perinuclear region, where the mTORC2 complex specifically mediates phosphorylation of SGK1. Phosphorylated at Thr-86 by AKT1 or RPS6KB1 in the presence of growth factors; the effect of this phosphorylation is however unclear. According to two studies, phosphorylation at Thr-86 by AKT1 is part of a positive feedback loop that increases mTORC2 activation. According to another study, phosphorylation at Thr-86 and Thr-398 by RPS6KB1 promotes dissociation from the mTORC2 complex, leading to inhibit mTORC2 signaling. Uniquitously expressed, with highest levels in testis, kidney and liver. Present in renal tubule cells (at protein level).

It localises to the cell membrane. The protein resides in the endoplasmic reticulum membrane. It is found in the early endosome membrane. The protein localises to the late endosome membrane. Its subcellular location is the lysosome membrane. It localises to the golgi apparatus membrane. The protein resides in the mitochondrion outer membrane. It is found in the cytoplasm. The protein localises to the perinuclear region. Its subcellular location is the nucleus. Phosphatidylinositol 3,4,5-trisphosphate (PI(3,4,5)P3) promotes MTOR activation by relieving MAPKAP1/SIN1-mediated inhibition of MTOR that takes place in absence of PI(3,4,5)P3. Its function is as follows. Component of the mechanistic target of rapamycin complex 2 (mTORC2), which transduces signals from growth factors to pathways involved in proliferation, cytoskeletal organization, lipogenesis and anabolic output. In response to growth factors, mTORC2 phosphorylates and activates AGC protein kinase family members, including AKT (AKT1, AKT2 and AKT3), PKC (PRKCA, PRKCB and PRKCE) and SGK1. In contrast to mTORC1, mTORC2 is nutrient-insensitive. Within the mTORC2 complex, MAPKAP1/SIN1 acts as a substrate adapter which recognizes and binds AGC protein kinase family members for phosphorylation by MTOR. mTORC2 plays a critical role in AKT1 activation by mediating phosphorylation of different sites depending on the context, such as 'Thr-450', 'Ser-473', 'Ser-477' or 'Thr-479', facilitating the phosphorylation of the activation loop of AKT1 on 'Thr-308' by PDPK1/PDK1 which is a prerequisite for full activation. mTORC2 catalyzes the phosphorylation of SGK1 at 'Ser-422' and of PRKCA on 'Ser-657'. The mTORC2 complex also phosphorylates various proteins involved in insulin signaling, such as FBXW8 and IGF2BP1. mTORC2 acts upstream of Rho GTPases to regulate the actin cytoskeleton, probably by activating one or more Rho-type guanine nucleotide exchange factors. mTORC2 promotes the serum-induced formation of stress-fibers or F-actin. MAPKAP1 inhibits MAP3K2 by preventing its dimerization and autophosphorylation. Inhibits HRAS and KRAS independently of mTORC2 complex. Enhances osmotic stress-induced phosphorylation of ATF2 and ATF2-mediated transcription. Involved in ciliogenesis, regulates cilia length through its interaction with CCDC28B independently of mTORC2 complex. This chain is Target of rapamycin complex 2 subunit MAPKAP1, found in Mus musculus (Mouse).